Here is an 845-residue protein sequence, read N- to C-terminus: Protein translocase subunit SecA 1 (845 aa).

Residues glutamine 85, 103 to 107 (GEGKT), and aspartate 492 each bind ATP.

The protein belongs to the SecA family. In terms of assembly, monomer and homodimer. Part of the essential Sec protein translocation apparatus which comprises SecA, SecYEG and auxiliary proteins SecDF. Other proteins may also be involved.

The protein resides in the cell membrane. Its subcellular location is the cytoplasm. It catalyses the reaction ATP + H2O + cellular proteinSide 1 = ADP + phosphate + cellular proteinSide 2.. In terms of biological role, part of the Sec protein translocase complex. Interacts with the SecYEG preprotein conducting channel. Has a central role in coupling the hydrolysis of ATP to the transfer of proteins into and across the cell membrane, serving as an ATP-driven molecular motor driving the stepwise translocation of polypeptide chains across the membrane. The polypeptide is Protein translocase subunit SecA 1 (Corynebacterium efficiens (strain DSM 44549 / YS-314 / AJ 12310 / JCM 11189 / NBRC 100395)).